A 274-amino-acid polypeptide reads, in one-letter code: Proteasome subunit beta type-7-B (274 aa).

Residues 1 to 37 constitute a propeptide, removed in mature form; sequence MSQSSVDIPPKGGFSFDLCKRNDMLTQKGLKAPSFLK. Residue threonine 40 is the Nucleophile of the active site.

It belongs to the peptidase T1B family. As to quaternary structure, component of the 20S core complex of the 26S proteasome. The 26S proteasome is composed of a core protease (CP), known as the 20S proteasome, capped at one or both ends by the 19S regulatory particle (RP/PA700). The 20S proteasome core is composed of 28 subunits that are arranged in four stacked rings, resulting in a barrel-shaped structure. The two end rings are each formed by seven alpha subunits, and the two central rings are each formed by seven beta subunits. The catalytic chamber with the active sites is on the inside of the barrel.

Its subcellular location is the cytoplasm. It is found in the nucleus. It carries out the reaction Cleavage of peptide bonds with very broad specificity.. Functionally, the proteasome is a multicatalytic proteinase complex which is characterized by its ability to cleave peptides with Arg, Phe, Tyr, Leu, and Glu adjacent to the leaving group at neutral or slightly basic pH. The proteasome has an ATP-dependent proteolytic activity. The sequence is that of Proteasome subunit beta type-7-B (PBB2) from Arabidopsis thaliana (Mouse-ear cress).